A 127-amino-acid polypeptide reads, in one-letter code: Holo-[acyl-carrier-protein] synthase (127 aa).

Residues Asp-9 and Glu-58 each coordinate Mg(2+).

This sequence belongs to the P-Pant transferase superfamily. AcpS family. Mg(2+) serves as cofactor.

It is found in the cytoplasm. It carries out the reaction apo-[ACP] + CoA = holo-[ACP] + adenosine 3',5'-bisphosphate + H(+). In terms of biological role, transfers the 4'-phosphopantetheine moiety from coenzyme A to a Ser of acyl-carrier-protein. In Shewanella sp. (strain MR-4), this protein is Holo-[acyl-carrier-protein] synthase.